The sequence spans 439 residues: Protein dumpy-20 (439 aa).

A disordered region spans residues 93–116; that stretch reads GTLSDPSLHGSNSSSSTSDVGSSV. Positions 96 to 116 are enriched in low complexity; that stretch reads SDPSLHGSNSSSSTSDVGSSV. 2 consecutive BED-type zinc fingers follow at residues 135 to 184 and 349 to 398; these read PTEN…YQKV and KTEH…YNDV. Residues cysteine 154, cysteine 157, histidine 172, histidine 177, cysteine 368, cysteine 371, histidine 386, and histidine 391 each coordinate Zn(2+).

Involved in cuticle function and is essential for normal morphological development. This Caenorhabditis briggsae protein is Protein dumpy-20 (dpy-20).